The sequence spans 87 residues: U3-theraphotoxin-Cg1c (87 aa).

Positions 1 to 23 (MRTFTLIAILTCAVLVIFHVSAA) are cleaved as a signal peptide. The propeptide occupies 24-51 (EELEAQDVIQPEDIFTGVATLEEDRIFE). Cystine bridges form between Cys52–Cys65, Cys56–Cys79, and Cys73–Cys84.

This sequence belongs to the neurotoxin 12 (Hwtx-2) family. 03 (juruin) subfamily. As to expression, expressed by the venom gland.

The protein resides in the secreted. In terms of biological role, probable ion channel inhibitor. The sequence is that of U3-theraphotoxin-Cg1c from Chilobrachys guangxiensis (Chinese earth tiger tarantula).